A 212-amino-acid chain; its full sequence is Hydroxyacylglutathione hydrolase GloC (212 aa).

Residues histidine 55, histidine 57, aspartate 59, histidine 60, histidine 132, aspartate 151, and histidine 192 each contribute to the Zn(2+) site.

It belongs to the metallo-beta-lactamase superfamily. Glyoxalase II family. The cofactor is Zn(2+).

It carries out the reaction an S-(2-hydroxyacyl)glutathione + H2O = a 2-hydroxy carboxylate + glutathione + H(+). The catalysed reaction is (R)-S-lactoylglutathione + H2O = (R)-lactate + glutathione + H(+). The protein operates within secondary metabolite metabolism; methylglyoxal degradation; (R)-lactate from methylglyoxal: step 2/2. Functionally, type II glyoxalase, isozyme of GloB, that hydrolyzes (R)-S-lactoylglutathione to (R)-lactate and glutathione. Plays a role in methylglyoxal (MG) detoxification. This is Hydroxyacylglutathione hydrolase GloC from Haemophilus influenzae (strain ATCC 51907 / DSM 11121 / KW20 / Rd).